Here is a 647-residue protein sequence, read N- to C-terminus: MSSSSSSLAAAAARKRALTEQRFSELSPALSPEVVKALKGGGFRRCTPVQAAAIPLLLSHKDVAVDAATGSGKTLAFVVPVVEILRRRPSPPKPHEVLGIIISPTRELSSQIYNVAQPFFATLKGVSSMLLVGGFDIKAELKKLEEEGANILVGTPGKLFDVMERLDTLNYKNLEILILDEADRLLDLGFQKQITSIISKLPKLRRTGLFSATQTEAVKELAKAGLRNPVRVEVKTEVKPTGKDGAQQELGPSKTPLGLRLEYMICEASNKSSQLVDFLVQNNGKKIMVYFATCACVDYWAIVLPLLDSLKGSPIIPYHGKMKQGPREKALASFSALSSGILVCTDVAARGLDIPHVDLIVQYDPPQDPNVFIHRAGRTARYDQEGDAIVFLLPKEDTYVEFLKRRGVPLTERECSTNAVDIVPQIRSAALEDRNVMEKGLTAFVSFVRAYKEHHCSYIFSWKDLEIGRLGMEYGLLQIPSMPEVKHHSLSLEGFTPVKDVDVTKIKYKDKAREKQRQKTLKRKAEELALRPEIEKRRKAPEKPEKPKRKKTGKQRQAVQTKEDMDELANEYRLLKKLKRGVIDEDEYEKLTGFGESDDDDSSDGGDSDLDERKERGNKVLKKIKQKGKAKGSRRFEGRSKQKTRRR.

The Q motif motif lies at 23 to 51; the sequence is FSELSPALSPEVVKALKGGGFRRCTPVQA. The Helicase ATP-binding domain occupies 54 to 232; it reads IPLLLSHKDV…KAGLRNPVRV (179 aa). Residue 67-74 participates in ATP binding; sequence AATGSGKT. The DEAD box signature appears at 180-183; that stretch reads DEAD. A Helicase C-terminal domain is found at 274–430; that stretch reads QLVDFLVQNN…DIVPQIRSAA (157 aa). A coiled-coil region spans residues 507-582; it reads KYKDKAREKQ…RLLKKLKRGV (76 aa). Basic and acidic residues predominate over residues 512-545; it reads AREKQRQKTLKRKAEELALRPEIEKRRKAPEKPE. 2 disordered regions span residues 512–565 and 590–647; these read AREK…KEDM and KLTG…TRRR. Positions 596-610 are enriched in acidic residues; that stretch reads ESDDDDSSDGGDSDL. A compositionally biased stretch (basic residues) spans 619-633; it reads KVLKKIKQKGKAKGS.

This sequence belongs to the DEAD box helicase family. DDX55/SPB4 subfamily. As to quaternary structure, interacts with BRI1. Post-translationally, phosphorylated.

It catalyses the reaction ATP + H2O = ADP + phosphate + H(+). This is DEAD-box ATP-dependent RNA helicase 18 from Oryza sativa subsp. japonica (Rice).